A 168-amino-acid polypeptide reads, in one-letter code: 2-C-methyl-D-erythritol 2,4-cyclodiphosphate synthase (168 aa).

A divalent metal cation contacts are provided by Asp8 and His10. 4-CDP-2-C-methyl-D-erythritol 2-phosphate is bound by residues 8–10 (DLH) and 34–35 (HS). An a divalent metal cation-binding site is contributed by His42. 4-CDP-2-C-methyl-D-erythritol 2-phosphate is bound by residues 56-58 (DIG), 61-65 (FPDTD), 132-135 (TTTE), and Arg142.

Belongs to the IspF family. Homotrimer. A divalent metal cation serves as cofactor.

It catalyses the reaction 4-CDP-2-C-methyl-D-erythritol 2-phosphate = 2-C-methyl-D-erythritol 2,4-cyclic diphosphate + CMP. It participates in isoprenoid biosynthesis; isopentenyl diphosphate biosynthesis via DXP pathway; isopentenyl diphosphate from 1-deoxy-D-xylulose 5-phosphate: step 4/6. Its function is as follows. Involved in the biosynthesis of isopentenyl diphosphate (IPP) and dimethylallyl diphosphate (DMAPP), two major building blocks of isoprenoid compounds. Catalyzes the conversion of 4-diphosphocytidyl-2-C-methyl-D-erythritol 2-phosphate (CDP-ME2P) to 2-C-methyl-D-erythritol 2,4-cyclodiphosphate (ME-CPP) with a corresponding release of cytidine 5-monophosphate (CMP). The sequence is that of 2-C-methyl-D-erythritol 2,4-cyclodiphosphate synthase from Desulfosudis oleivorans (strain DSM 6200 / JCM 39069 / Hxd3) (Desulfococcus oleovorans).